We begin with the raw amino-acid sequence, 329 residues long: G-protein coupled bile acid receptor 1 (329 aa).

At 1-18 (MMSHNTTELSAIPRGVQE) the chain is on the extracellular side. N-linked (GlcNAc...) asparagine glycosylation is present at Asn-5. A helical transmembrane segment spans residues 19–39 (LSLVLASLIVIANLLLALGIV). The Cytoplasmic portion of the chain corresponds to 40 to 49 (LDRHLRSPPA). The helical transmembrane segment at 50-70 (GCFFLSLLLAGLLTGLALPTL) threads the bilayer. The Extracellular portion of the chain corresponds to 71-84 (PGLWNRSHQGYWSC). N-linked (GlcNAc...) asparagine glycosylation is present at Asn-75. Cysteines 84 and 154 form a disulfide. A helical membrane pass occupies residues 85–105 (LLLHLAPNFCFLSLLANLLLV). The Cytoplasmic portion of the chain corresponds to 106-124 (HGERYMAVLQPLRPHGSVR). The chain crosses the membrane as a helical span at residues 125–145 (LALFLTWISSLLFASLPALGW). Residues 146 to 157 (NHWSPGANCSSQ) lie on the Extracellular side of the membrane. N-linked (GlcNAc...) asparagine glycosylation is present at Asn-153. Residues 158-178 (AIFPAPYLYLEVYGLLLPAVG) form a helical membrane-spanning segment. Residues 179-229 (ATALLSVRVLATAHHQLREIRRLERAVCRDAPSTLARALTWRQARAQAGAT) are Cytoplasmic-facing. The helical transmembrane segment at 230–250 (LLFLLCWGPYVATLLLSVLAY) threads the bilayer. The Extracellular segment spans residues 251 to 260 (ERRPPLGPVT). A helical membrane pass occupies residues 261–281 (LLSLISLGSASAAVVPVAMGL). Topologically, residues 282-329 (GDQRYTAPWRTAAQRWLQVLRGRPKRANPGPSTAYHSSSQCSTDLDLN) are cytoplasmic. A disordered region spans residues 306–329 (KRANPGPSTAYHSSSQCSTDLDLN). Over residues 311–329 (GPSTAYHSSSQCSTDLDLN) the composition is skewed to polar residues.

It belongs to the G-protein coupled receptor 1 family.

Its subcellular location is the cell membrane. In terms of biological role, receptor for bile acid. Bile acid-binding induces its internalization, activation of extracellular signal-regulated kinase and intracellular cAMP production. May be involved in the suppression of macrophage functions by bile acids. Involved in bile acid promoted GLP1R secretion. The sequence is that of G-protein coupled bile acid receptor 1 (Gpbar1) from Rattus norvegicus (Rat).